The following is a 624-amino-acid chain: ERAD-associated E3 ubiquitin-protein ligase ASI1 (624 aa).

At 1 to 69 (MNSSTSSENV…SEEIPPTLRS (69 aa)) the chain is on the perinuclear space side. N-linked (GlcNAc...) asparagine glycosylation is found at asparagine 2, asparagine 19, and asparagine 29. A helical membrane pass occupies residues 70-90 (VFDTIGFFFSPYAIFCFVIAI). The Nuclear segment spans residues 91-116 (VLNRFVVFYAVLNNGSRRTLPLWLSN). A helical transmembrane segment spans residues 117-137 (VFHVSAVVVLAMVSLGPLTLG). Over 138 to 152 (KDFKILGDPAFAQEK) the chain is Perinuclear space. Residues 153-173 (FLLNIFYAFAYSYCVETIFTI) traverse the membrane as a helical segment. The Nuclear segment spans residues 174 to 209 (MRNSSPLEGTDYSLFELSIQFYTMTNNNTKFLDSPD). Residues 210–230 (YIIDCSMAILSRILIHLVEIF) form a helical membrane-spanning segment. Residues 231-273 (RLRNYRLLFSTIMNLCHICYLGIRVKQGGWKSLPFSVKFRHFP) lie on the Perinuclear space side of the membrane. Residues 274–294 (KLFSVSIICLSLLIFKLSCLI) traverse the membrane as a helical segment. Topologically, residues 295-624 (RWDPFGKSRN…CKVHPVSDSK (330 aa)) are nuclear. Residues 467 to 490 (TSDDEYSEDYEPSEVESLGDSDEE) form a disordered region. The segment covering 468–490 (SDDEYSEDYEPSEVESLGDSDEE) has biased composition (acidic residues). The segment at 568–608 (CAVCKVNERNTVLWPCRCFAICEDCRISLGLRGFSTCVCCR) adopts an RING-type; atypical zinc-finger fold.

As to quaternary structure, component of the Asi complex, which contains ASI1, ASI2 and ASI3. Interacts directly with ASI3. Glycosylation is not required for ASI1 function.

It is found in the nucleus inner membrane. It carries out the reaction S-ubiquitinyl-[E2 ubiquitin-conjugating enzyme]-L-cysteine + [acceptor protein]-L-lysine = [E2 ubiquitin-conjugating enzyme]-L-cysteine + N(6)-ubiquitinyl-[acceptor protein]-L-lysine.. Functionally, E3 ubiquitin-protein ligase which transfers ubiquitin to substrates promoting their degradation. Part of the nuclear inner membrane (INM)-specific branch of the ER-associated degradation (ERAD) pathway, required for the elimination of misfolded proteins in the INM, a specialized ER subdomain. Required for ERG11 degradation. Negative regulator of SPS-sensor signaling. Together with ASI2 and ASI3, prevents the unprocessed precursor forms of STP1 and STP2 that escape cytoplasmic anchoring from inducing SPS-sensor-regulated genes in the absence of inducing signals. Controls amino acid permease (AAP) gene expression in response to amino acid availability, a process mediated by the transcription factors STP1 and STP1. The protein is ERAD-associated E3 ubiquitin-protein ligase ASI1 (ASI1) of Saccharomyces cerevisiae (strain ATCC 204508 / S288c) (Baker's yeast).